Here is a 307-residue protein sequence, read N- to C-terminus: Aspartate carbamoyltransferase catalytic subunit (307 aa).

The carbamoyl phosphate site is built by Arg-54 and Thr-55. Lys-83 serves as a coordination point for L-aspartate. Residues Arg-104, His-132, and Gln-135 each contribute to the carbamoyl phosphate site. The L-aspartate site is built by Arg-165 and Arg-228. Leu-267 and Pro-268 together coordinate carbamoyl phosphate.

It belongs to the aspartate/ornithine carbamoyltransferase superfamily. ATCase family. In terms of assembly, heterododecamer (2C3:3R2) of six catalytic PyrB chains organized as two trimers (C3), and six regulatory PyrI chains organized as three dimers (R2).

The catalysed reaction is carbamoyl phosphate + L-aspartate = N-carbamoyl-L-aspartate + phosphate + H(+). It functions in the pathway pyrimidine metabolism; UMP biosynthesis via de novo pathway; (S)-dihydroorotate from bicarbonate: step 2/3. Its function is as follows. Catalyzes the condensation of carbamoyl phosphate and aspartate to form carbamoyl aspartate and inorganic phosphate, the committed step in the de novo pyrimidine nucleotide biosynthesis pathway. This is Aspartate carbamoyltransferase catalytic subunit from Clostridium perfringens (strain ATCC 13124 / DSM 756 / JCM 1290 / NCIMB 6125 / NCTC 8237 / Type A).